Consider the following 421-residue polypeptide: D-amino acid dehydrogenase (421 aa).

4–18 lines the FAD pocket; the sequence is VLVLGSGVVGLTSAW.

The protein belongs to the DadA oxidoreductase family. Requires FAD as cofactor.

It catalyses the reaction a D-alpha-amino acid + A + H2O = a 2-oxocarboxylate + AH2 + NH4(+). Oxidative deamination of D-amino acids. The protein is D-amino acid dehydrogenase of Vibrio cholerae serotype O1 (strain ATCC 39315 / El Tor Inaba N16961).